The following is a 301-amino-acid chain: Acetylglutamate kinase (301 aa).

Residues Gly68 to Gly69, Arg90, and Asn195 contribute to the substrate site.

Belongs to the acetylglutamate kinase family. ArgB subfamily.

Its subcellular location is the cytoplasm. It carries out the reaction N-acetyl-L-glutamate + ATP = N-acetyl-L-glutamyl 5-phosphate + ADP. It participates in amino-acid biosynthesis; L-arginine biosynthesis; N(2)-acetyl-L-ornithine from L-glutamate: step 2/4. Catalyzes the ATP-dependent phosphorylation of N-acetyl-L-glutamate. The polypeptide is Acetylglutamate kinase (Pseudomonas paraeruginosa (strain DSM 24068 / PA7) (Pseudomonas aeruginosa (strain PA7))).